The chain runs to 412 residues: Multifunctional CCA protein (412 aa).

Glycine 8 and arginine 11 together coordinate ATP. Glycine 8 and arginine 11 together coordinate CTP. Mg(2+)-binding residues include glutamate 21 and aspartate 23. Residues arginine 92, arginine 138, and arginine 141 each coordinate ATP. Positions 92, 138, and 141 each coordinate CTP. In terms of domain architecture, HD spans 227-328; it reads TGIHTMMTVA…IKLFYAIDVW (102 aa).

This sequence belongs to the tRNA nucleotidyltransferase/poly(A) polymerase family. Bacterial CCA-adding enzyme type 1 subfamily. In terms of assembly, monomer. Can also form homodimers and oligomers. Requires Mg(2+) as cofactor. Ni(2+) serves as cofactor.

It catalyses the reaction a tRNA precursor + 2 CTP + ATP = a tRNA with a 3' CCA end + 3 diphosphate. The catalysed reaction is a tRNA with a 3' CCA end + 2 CTP + ATP = a tRNA with a 3' CCACCA end + 3 diphosphate. Catalyzes the addition and repair of the essential 3'-terminal CCA sequence in tRNAs without using a nucleic acid template. Adds these three nucleotides in the order of C, C, and A to the tRNA nucleotide-73, using CTP and ATP as substrates and producing inorganic pyrophosphate. tRNA 3'-terminal CCA addition is required both for tRNA processing and repair. Also involved in tRNA surveillance by mediating tandem CCA addition to generate a CCACCA at the 3' terminus of unstable tRNAs. While stable tRNAs receive only 3'-terminal CCA, unstable tRNAs are marked with CCACCA and rapidly degraded. The polypeptide is Multifunctional CCA protein (Baumannia cicadellinicola subsp. Homalodisca coagulata).